The sequence spans 94 residues: DNA-binding protein HU (94 aa).

Belongs to the bacterial histone-like protein family.

Its function is as follows. Histone-like DNA-binding protein which is capable of wrapping DNA to stabilize it, and thus to prevent its denaturation under extreme environmental conditions. This Xylella fastidiosa (strain 9a5c) protein is DNA-binding protein HU (hup).